Reading from the N-terminus, the 340-residue chain is Holliday junction branch migration complex subunit RuvB (340 aa).

Residues 1-184 (MNENLDPTNQ…FGIQSRLQYY (184 aa)) form a large ATPase domain (RuvB-L) region. ATP contacts are provided by residues leucine 23, arginine 24, glycine 65, lysine 68, threonine 69, threonine 70, 131–133 (EDF), arginine 174, tyrosine 184, and arginine 221. Threonine 69 serves as a coordination point for Mg(2+). Residues 185–255 (NAELLTTIVQ…IAKFALNALH (71 aa)) form a small ATPAse domain (RuvB-S) region. The tract at residues 258–340 (AHGLDEMDNK…VKANVQGGLF (83 aa)) is head domain (RuvB-H). Arginine 313 and arginine 318 together coordinate DNA.

The protein belongs to the RuvB family. As to quaternary structure, homohexamer. Forms an RuvA(8)-RuvB(12)-Holliday junction (HJ) complex. HJ DNA is sandwiched between 2 RuvA tetramers; dsDNA enters through RuvA and exits via RuvB. An RuvB hexamer assembles on each DNA strand where it exits the tetramer. Each RuvB hexamer is contacted by two RuvA subunits (via domain III) on 2 adjacent RuvB subunits; this complex drives branch migration. In the full resolvosome a probable DNA-RuvA(4)-RuvB(12)-RuvC(2) complex forms which resolves the HJ.

It localises to the cytoplasm. The catalysed reaction is ATP + H2O = ADP + phosphate + H(+). Functionally, the RuvA-RuvB-RuvC complex processes Holliday junction (HJ) DNA during genetic recombination and DNA repair, while the RuvA-RuvB complex plays an important role in the rescue of blocked DNA replication forks via replication fork reversal (RFR). RuvA specifically binds to HJ cruciform DNA, conferring on it an open structure. The RuvB hexamer acts as an ATP-dependent pump, pulling dsDNA into and through the RuvAB complex. RuvB forms 2 homohexamers on either side of HJ DNA bound by 1 or 2 RuvA tetramers; 4 subunits per hexamer contact DNA at a time. Coordinated motions by a converter formed by DNA-disengaged RuvB subunits stimulates ATP hydrolysis and nucleotide exchange. Immobilization of the converter enables RuvB to convert the ATP-contained energy into a lever motion, pulling 2 nucleotides of DNA out of the RuvA tetramer per ATP hydrolyzed, thus driving DNA branch migration. The RuvB motors rotate together with the DNA substrate, which together with the progressing nucleotide cycle form the mechanistic basis for DNA recombination by continuous HJ branch migration. Branch migration allows RuvC to scan DNA until it finds its consensus sequence, where it cleaves and resolves cruciform DNA. The polypeptide is Holliday junction branch migration complex subunit RuvB (Flavobacterium psychrophilum (strain ATCC 49511 / DSM 21280 / CIP 103535 / JIP02/86)).